A 436-amino-acid chain; its full sequence is Trigger factor (436 aa).

Positions 163-248 (GDRVTLDFAG…VKEVAEGVLP (86 aa)) constitute a PPIase FKBP-type domain.

It belongs to the FKBP-type PPIase family. Tig subfamily.

It is found in the cytoplasm. It catalyses the reaction [protein]-peptidylproline (omega=180) = [protein]-peptidylproline (omega=0). Functionally, involved in protein export. Acts as a chaperone by maintaining the newly synthesized protein in an open conformation. Functions as a peptidyl-prolyl cis-trans isomerase. This is Trigger factor from Bordetella petrii (strain ATCC BAA-461 / DSM 12804 / CCUG 43448).